The sequence spans 159 residues: Protein-export protein SecB (159 aa).

The protein belongs to the SecB family. Homotetramer, a dimer of dimers. One homotetramer interacts with 1 SecA dimer.

The protein resides in the cytoplasm. One of the proteins required for the normal export of preproteins out of the cell cytoplasm. It is a molecular chaperone that binds to a subset of precursor proteins, maintaining them in a translocation-competent state. It also specifically binds to its receptor SecA. The chain is Protein-export protein SecB from Pseudomonas fluorescens (strain ATCC BAA-477 / NRRL B-23932 / Pf-5).